The primary structure comprises 301 residues: MKNKAFGQIMDDAENPGFFKILRSADLSSEIMRGIPLNFIKSISEEELSAKMLLKVSWGSSWPIKICRNPSFYFMEKKGWDQFLSDNGLGNDEFLTFTHQGNMCFTVDIYQIDGKELLTPRRSATIASSSGRNKREQRNNIYKDVKEEEDIESWSESSYPGHKTAESTGRRQRLSLSNKKAKETEKSKKKKMKVESISYDSQDDSLSLVPEFTLTIKKSYLIFLGIPKMFEELHMPTEATMFKIHDPEGKRSWDVMYKFSNNQTRFCAGWIRLAKELGLEIGDVCTFTLIKPTEMLVRVSK.

The segment at residues 18–113 (FFKILRSADL…CFTVDIYQID (96 aa)) is a DNA-binding region (TF-B3 1). Disordered regions lie at residues 123 to 142 (SATI…NNIY) and 153 to 194 (SWSE…KMKV). Positions 133–142 (NKREQRNNIY) are enriched in basic and acidic residues. Residues 209-301 (VPEFTLTIKK…PTEMLVRVSK (93 aa)) constitute a DNA-binding region (TF-B3 2).

It is found in the nucleus. This Arabidopsis thaliana (Mouse-ear cress) protein is B3 domain-containing protein At5g18090.